The primary structure comprises 1006 residues: UPF0182 protein Arth_2749 (1006 aa).

A run of 7 helical transmembrane segments spans residues 18–38 (GALT…IFFA), 64–84 (IIIF…AIRI), 115–135 (VVMI…AASQ), 168–188 (FLGF…IAGI), 211–231 (QIHL…NFWL), 260–280 (SILA…AVIG), and 287–307 (IGTA…PWVI). Disordered regions lie at residues 490–519 (GAPE…FTGN), 896–923 (KAGD…GGTD), and 975–1006 (LGSE…SPSN). A compositionally biased stretch (basic and acidic residues) spans 495-509 (SPHREQDRPAGKEGD). 2 stretches are compositionally biased toward low complexity: residues 911–923 (AGGS…GGTD) and 979–1000 (GASP…AATP).

Belongs to the UPF0182 family.

The protein resides in the cell membrane. This is UPF0182 protein Arth_2749 from Arthrobacter sp. (strain FB24).